The primary structure comprises 182 residues: Lipoprotein signal peptidase (182 aa).

3 consecutive transmembrane segments (helical) span residues 12-32 (VAVF…TKAW), 68-88 (ATWV…VAGV), and 91-111 (VSMK…GNLI). Catalysis depends on residues Asp127 and Asp140. Residues 135-155 (VGNVADIYLVVAGVVLVILIL) traverse the membrane as a helical segment.

This sequence belongs to the peptidase A8 family.

It localises to the cell membrane. The catalysed reaction is Release of signal peptides from bacterial membrane prolipoproteins. Hydrolyzes -Xaa-Yaa-Zaa-|-(S,diacylglyceryl)Cys-, in which Xaa is hydrophobic (preferably Leu), and Yaa (Ala or Ser) and Zaa (Gly or Ala) have small, neutral side chains.. The protein operates within protein modification; lipoprotein biosynthesis (signal peptide cleavage). Functionally, this protein specifically catalyzes the removal of signal peptides from prolipoproteins. This Bifidobacterium longum (strain DJO10A) protein is Lipoprotein signal peptidase.